A 540-amino-acid polypeptide reads, in one-letter code: Chaperonin GroEL (540 aa).

ATP-binding positions include 29 to 32, 86 to 90, glycine 413, 477 to 479, and aspartate 493; these read TIGP, DGTTT, and NAA.

The protein belongs to the chaperonin (HSP60) family. Forms a cylinder of 14 subunits composed of two heptameric rings stacked back-to-back. Interacts with the co-chaperonin GroES.

It is found in the cytoplasm. It catalyses the reaction ATP + H2O + a folded polypeptide = ADP + phosphate + an unfolded polypeptide.. Functionally, together with its co-chaperonin GroES, plays an essential role in assisting protein folding. The GroEL-GroES system forms a nano-cage that allows encapsulation of the non-native substrate proteins and provides a physical environment optimized to promote and accelerate protein folding. This chain is Chaperonin GroEL, found in Lactobacillus helveticus (strain DPC 4571).